Here is a 239-residue protein sequence, read N- to C-terminus: Ribonuclease 3 (239 aa).

The RNase III domain occupies Arg12 to Gly137. Glu50 contributes to the Mg(2+) binding site. Asp54 is a catalytic residue. 2 residues coordinate Mg(2+): Asp123 and Glu126. Glu126 is an active-site residue. Residues Asp162–Val231 enclose the DRBM domain.

This sequence belongs to the ribonuclease III family. Homodimer. The cofactor is Mg(2+).

The protein resides in the cytoplasm. The catalysed reaction is Endonucleolytic cleavage to 5'-phosphomonoester.. In terms of biological role, digests double-stranded RNA. Involved in the processing of primary rRNA transcript to yield the immediate precursors to the large and small rRNAs (23S and 16S). Processes some mRNAs, and tRNAs when they are encoded in the rRNA operon. Processes pre-crRNA and tracrRNA of type II CRISPR loci if present in the organism. This Allorhizobium ampelinum (strain ATCC BAA-846 / DSM 112012 / S4) (Agrobacterium vitis (strain S4)) protein is Ribonuclease 3.